The sequence spans 101 residues: NAD(P)H-quinone oxidoreductase subunit 4L, chloroplastic (101 aa).

3 helical membrane passes run M2 to I22, M32 to F52, and I61 to V81.

The protein belongs to the complex I subunit 4L family. In terms of assembly, NDH is composed of at least 16 different subunits, 5 of which are encoded in the nucleus.

It localises to the plastid. The protein resides in the chloroplast thylakoid membrane. The catalysed reaction is a plastoquinone + NADH + (n+1) H(+)(in) = a plastoquinol + NAD(+) + n H(+)(out). It catalyses the reaction a plastoquinone + NADPH + (n+1) H(+)(in) = a plastoquinol + NADP(+) + n H(+)(out). In terms of biological role, NDH shuttles electrons from NAD(P)H:plastoquinone, via FMN and iron-sulfur (Fe-S) centers, to quinones in the photosynthetic chain and possibly in a chloroplast respiratory chain. The immediate electron acceptor for the enzyme in this species is believed to be plastoquinone. Couples the redox reaction to proton translocation, and thus conserves the redox energy in a proton gradient. This is NAD(P)H-quinone oxidoreductase subunit 4L, chloroplastic from Calycanthus floridus var. glaucus (Eastern sweetshrub).